The chain runs to 158 residues: Probable deoxyuridine 5'-triphosphate nucleotidohydrolase (158 aa).

Belongs to the dUTPase family. Mg(2+) is required as a cofactor.

It catalyses the reaction dUTP + H2O = dUMP + diphosphate + H(+). Its pathway is pyrimidine metabolism; dUMP biosynthesis; dUMP from dCTP (dUTP route): step 1/2. In terms of biological role, this enzyme is involved in nucleotide metabolism: it produces dUMP, the immediate precursor of thymidine nucleotides and it decreases the intracellular concentration of dUTP so that uracil cannot be incorporated into DNA. It does probably not deaminate dCTP. This is Probable deoxyuridine 5'-triphosphate nucleotidohydrolase from Sulfolobus islandicus rod-shaped virus 1 (SIRV-1).